Reading from the N-terminus, the 257-residue chain is Protein orai-2 (257 aa).

Helical transmembrane passes span 62–79 (ASSRTSALLSGFAMVAMV), 94–114 (LIAFSACTTVLVAVHLFALLI), 156–176 (LGILLFLAEVVLLCWIKFLPI), and 201–221 (LVSTIIMVPVGIIFVIFTIHF).

This sequence belongs to the Orai family.

It is found in the membrane. Its function is as follows. Ca(2+) release-activated Ca(2+)-like (CRAC-like) channel subunit which mediates Ca(2+) influx and increase in Ca(2+)-selective current by synergy with the Ca(2+) sensor, stim1. This is Protein orai-2 (orai2) from Xenopus laevis (African clawed frog).